The primary structure comprises 161 residues: Nucleotide-binding protein H16_A3060 (161 aa).

The protein belongs to the YajQ family.

In terms of biological role, nucleotide-binding protein. The protein is Nucleotide-binding protein H16_A3060 of Cupriavidus necator (strain ATCC 17699 / DSM 428 / KCTC 22496 / NCIMB 10442 / H16 / Stanier 337) (Ralstonia eutropha).